The primary structure comprises 209 residues: Ras-like protein (209 aa).

Position 10–17 (10–17 (GGGLVGKS)) interacts with GTP. The Effector region signature appears at 55–63 (YDPTVEDSR). Thr-58 is modified (phosphothreonine). GTP contacts are provided by residues 79–83 (DTAGQ) and 140–143 (NKAD). Position 206 is a cysteine methyl ester (Cys-206). Cys-206 is lipidated: S-geranylgeranyl cysteine. Positions 207 to 209 (LII) are cleaved as a propeptide — removed in mature form.

Belongs to the small GTPase superfamily. Ras family. Post-translationally, phosphorylated in the presence of insulin.

It localises to the cell membrane. It carries out the reaction GTP + H2O = GDP + phosphate + H(+). With respect to regulation, alternates between an inactive form bound to GDP and an active form bound to GTP. Activated by a guanine nucleotide-exchange factor (GEF) and inactivated by a GTPase-activating protein (GAP). Functionally, this protein is activated by the insulin/insulin (insulin-like)-receptor system. This transition enables the ras protein to interact with the lectin-receptor/lectin complex, a process which ultimately lead to an initiation of an intra-cellular signal-transduction chain. In Geodia cydonium (Sponge), this protein is Ras-like protein.